The following is a 335-amino-acid chain: tRNA N6-adenosine threonylcarbamoyltransferase (335 aa).

A divalent metal cation contacts are provided by His109, His113, and Tyr130. Substrate contacts are provided by residues 130-134 (YVSGG), Asp162, Gly177, Glu181, and Asn266. Residue Asp294 coordinates a divalent metal cation.

This sequence belongs to the KAE1 / TsaD family. As to quaternary structure, component of the EKC/KEOPS complex composed of at least GON7, TP53RK, TPRKB, OSGEP and LAGE3; the whole complex dimerizes. A divalent metal cation is required as a cofactor. As to expression, widely expressed at low level. Expressed at intermediate level in lung. Weakly expressed in testis, skeletal muscle, kidney, liver, spleen, brain and heart.

The protein resides in the cytoplasm. It localises to the nucleus. The enzyme catalyses L-threonylcarbamoyladenylate + adenosine(37) in tRNA = N(6)-L-threonylcarbamoyladenosine(37) in tRNA + AMP + H(+). Component of the EKC/KEOPS complex that is required for the formation of a threonylcarbamoyl group on adenosine at position 37 (t(6)A37) in tRNAs that read codons beginning with adenine. The complex is probably involved in the transfer of the threonylcarbamoyl moiety of threonylcarbamoyl-AMP (TC-AMP) to the N6 group of A37. OSGEP likely plays a direct catalytic role in this reaction, but requires other protein(s) of the complex to fulfill this activity. The protein is tRNA N6-adenosine threonylcarbamoyltransferase (Osgep) of Mus musculus (Mouse).